The primary structure comprises 189 residues: Threonylcarbamoyl-AMP synthase (189 aa).

The 187-residue stretch at 3-189 folds into the YrdC-like domain; that stretch reads TTSVTEAAEC…NALTGEVIRP (187 aa).

It belongs to the SUA5 family. TsaC subfamily.

It is found in the cytoplasm. It catalyses the reaction L-threonine + hydrogencarbonate + ATP = L-threonylcarbamoyladenylate + diphosphate + H2O. Its function is as follows. Required for the formation of a threonylcarbamoyl group on adenosine at position 37 (t(6)A37) in tRNAs that read codons beginning with adenine. Catalyzes the conversion of L-threonine, HCO(3)(-)/CO(2) and ATP to give threonylcarbamoyl-AMP (TC-AMP) as the acyladenylate intermediate, with the release of diphosphate. This is Threonylcarbamoyl-AMP synthase from Acinetobacter baumannii (strain ACICU).